We begin with the raw amino-acid sequence, 184 residues long: FMRFamide-like neuropeptides 3 (184 aa).

The signal sequence occupies residues 1-23 (MISPNHLILLFCVNCAFLVASDA). The propeptide occupies 24-25 (TP). Phe-35 is subject to Phenylalanine amide. A propeptide spanning residues 39-73 (AIADEMTFEEDGYYPSNVMWKRSTVDSSEPVIRDQ) is cleaved from the precursor. Phe-82, Phe-95, Phe-111, and Phe-126 each carry phenylalanine amide. Residues 90–110 (FGTMRFGKRNPENDTPFGTMR) form a disordered region. Positions 130-142 (EDGNAPFGTMKFG) are excised as a propeptide. The disordered stretch occupies residues 150–184 (LGTMRFGKRSADDSAPFGTMRFGKRNPLGTMRFGK). 3 positions are modified to phenylalanine amide: Phe-155, Phe-171, and Phe-182.

It belongs to the FARP (FMRFamide related peptide) family. As to expression, each flp gene is expressed in a distinct set of neurons. Flp-3 is expressed in the IL1 and PQR neurons.

It localises to the secreted. FMRFamides and FMRFamide-like peptides are neuropeptides. SAEPFGTMRF-amide inhibits the activity of dissected pharyngeal myogenic muscle system. This is FMRFamide-like neuropeptides 3 from Caenorhabditis elegans.